The primary structure comprises 393 residues: UPF0496 protein At2g18630 (393 aa).

The tract at residues 1 to 20 (MMGGKSSKSKKNVEFGSPST) is disordered. A coiled-coil region spans residues 149–222 (VNQFEEENED…RLRNIKTWRR (74 aa)). 2 helical membrane-spanning segments follow: residues 226–246 (MVFV…AAVA) and 249–269 (PVVA…GKWC). Residues 299–356 (KEMDNISILVRKVEVEIESLLKKAEFAITEEKEVRLAIDEIKKKLDVFTETIEELGEH) are a coiled coil.

Belongs to the UPF0496 family.

It localises to the membrane. This chain is UPF0496 protein At2g18630, found in Arabidopsis thaliana (Mouse-ear cress).